The primary structure comprises 281 residues: Cardosin-F (281 aa).

The region spanning 18–278 is the Peptidase A1 domain; it reads YYGEIGIGTP…DYGNLLVGFA (261 aa). The active site involves aspartate 36. The cysteines at positions 181 and 185 are disulfide-linked. Aspartate 190 is an active-site residue. An N-linked (GlcNAc...) asparagine glycan is attached at asparagine 213.

The protein belongs to the peptidase A1 family. In terms of assembly, heterodimer of a light chain and a heavy chain. An intermediate form is produced first, and undergoes proteolytic processing to remove the internal plant-specific insert (PSI) and the propeptide. In terms of processing, N-glycosylated. Pistils.

The protein localises to the microsome membrane. It is found in the protein storage vacuole. The protein resides in the secreted. Its subcellular location is the cell wall. It localises to the extracellular space. The protein localises to the extracellular matrix. With respect to regulation, inhibited by pepstatin. In terms of biological role, aspartic protease with a high preference for bonds between hydrophobic residues. This is Cardosin-F from Cynara cardunculus (Cardoon).